Here is a 540-residue protein sequence, read N- to C-terminus: Chaperonin GroEL (540 aa).

ATP is bound by residues 29 to 32 (TLGP), 86 to 90 (DGTTT), G413, 476 to 478 (NAA), and D492.

It belongs to the chaperonin (HSP60) family. As to quaternary structure, forms a cylinder of 14 subunits composed of two heptameric rings stacked back-to-back. Interacts with the co-chaperonin GroES.

Its subcellular location is the cytoplasm. It carries out the reaction ATP + H2O + a folded polypeptide = ADP + phosphate + an unfolded polypeptide.. Its function is as follows. Together with its co-chaperonin GroES, plays an essential role in assisting protein folding. The GroEL-GroES system forms a nano-cage that allows encapsulation of the non-native substrate proteins and provides a physical environment optimized to promote and accelerate protein folding. The sequence is that of Chaperonin GroEL from Geobacillus thermodenitrificans (strain NG80-2).